Consider the following 110-residue polypeptide: Phosphoribosyl-ATP pyrophosphatase (110 aa).

This sequence belongs to the PRA-PH family.

Its subcellular location is the cytoplasm. The catalysed reaction is 1-(5-phospho-beta-D-ribosyl)-ATP + H2O = 1-(5-phospho-beta-D-ribosyl)-5'-AMP + diphosphate + H(+). Its pathway is amino-acid biosynthesis; L-histidine biosynthesis; L-histidine from 5-phospho-alpha-D-ribose 1-diphosphate: step 2/9. The polypeptide is Phosphoribosyl-ATP pyrophosphatase (Pseudomonas fluorescens (strain ATCC BAA-477 / NRRL B-23932 / Pf-5)).